The primary structure comprises 154 residues: MSGSMFSVFSLLYLLSVCSACYISNCPIGGKRAIQDSPSRQCMSCGPGDRGRCFGPSICCGEGLGCLLGSPETQRCLEEDFLPSPCEAGGKVCGYEGRCAAPGVCCDSEGCSVDQSCVDGDGDATAVSQPASSQDLLLKLLHLSNPAHPYRLHQ.

The first 20 residues, 1-20 (MSGSMFSVFSLLYLLSVCSA), serve as a signal peptide directing secretion. A disulfide bridge links Cys21 with Cys26. Gly29 carries the post-translational modification Glycine amide. 7 disulfide bridges follow: Cys42-Cys86, Cys45-Cys59, Cys53-Cys76, Cys60-Cys66, Cys93-Cys105, Cys99-Cys117, and Cys106-Cys111.

Belongs to the vasopressin/oxytocin family.

Its function is as follows. Isotocin causes contraction of smooth muscles. This Catostomus commersonii (White sucker) protein is Isotocin-neurophysin IT 1.